A 325-amino-acid polypeptide reads, in one-letter code: Diadenosine 5',5'''-P1,P4-tetraphosphate phosphorylase 2 (325 aa).

Substrate-binding positions include Lys-53, 92 to 93 (NK), Asn-148, and 154 to 157 (GSSQ). His-161 serves as the catalytic Nucleophile. Residues Gln-163, 277–279 (NST), Met-284, and Lys-288 contribute to the substrate site.

It belongs to the ATP adenylyltransferase family. In terms of assembly, monomer. A divalent metal cation serves as cofactor.

Its subcellular location is the cytoplasm. It localises to the nucleus. It catalyses the reaction ADP + ATP + H(+) = P(1),P(4)-bis(5'-adenosyl) tetraphosphate + phosphate. The enzyme catalyses sulfate + ADP + H(+) = adenosine 5'-phosphosulfate + phosphate. Functionally, ap4A phosphorylase catalyzes the phosphorolytic degradation of bis(5'-adenosyl) tetraphosphate (Ap4A) into ADP and ATP. Can also use other Np4N' nucleotides (where N and N' stand for A,C,G or U) as substrates, but prefers A-containing substrates. Cannot catalyze the reverse reaction. Additionally, this enzyme can also catalyze the phosphorolytic degradation of adenosine 5'-phosphosulfate (AMPS) into ADP and sulfate, the reversible exchange reaction between inorganic phosphate and the beta-phosphate of a nucleoside diphosphate (NDP), and the synthesis of Ap4A from AMPS plus ATP. This is Diadenosine 5',5'''-P1,P4-tetraphosphate phosphorylase 2 from Saccharomyces cerevisiae (strain ATCC 204508 / S288c) (Baker's yeast).